The following is a 302-amino-acid chain: CASP-like protein 4A2 (302 aa).

Residues 1–13 show a composition bias toward polar residues; that stretch reads MALQAQQQATPSP. A disordered region spans residues 1-134; sequence MALQAQQQAT…APPPHAQVRS (134 aa). Residues 1–154 are Cytoplasmic-facing; it reads MALQAQQQAT…RKRRAAVMQR (154 aa). The span at 40–60 shows a compositional bias: low complexity; the sequence is VVVASTHHAAAAARYVPPRAT. Over residues 99–129 the composition is skewed to pro residues; the sequence is KTPPPAPPLPAAPPPPPAASPAPAPRAPPPH. Residues 155-175 form a helical membrane-spanning segment; it reads AALLARAAAAGLCLAALAVLA. Over 176–197 the chain is Extracellular; that stretch reads SDTRRGWARDSYSNYAQFRYSE. Residues 198-218 traverse the membrane as a helical segment; sequence AVNVVGFLYSVFQFVALAELM. Topologically, residues 219–238 are cytoplasmic; it reads RRNKHLIPHPKRDLFDFTMD. A helical membrane pass occupies residues 239-256; it reads QVVAYLLISSSSSATARA. The Extracellular portion of the chain corresponds to 257 to 273; that stretch reads SDLIENWGSDSFPSMAN. The chain crosses the membrane as a helical span at residues 274–294; it reads GSIAISFVAFVVFAICSLISA. Residues 295 to 302 are Cytoplasmic-facing; it reads YNLFRRDM.

Belongs to the Casparian strip membrane proteins (CASP) family. In terms of assembly, homodimer and heterodimers.

It is found in the cell membrane. This chain is CASP-like protein 4A2, found in Zea mays (Maize).